Reading from the N-terminus, the 107-residue chain is L-rhamnose mutarotase (107 aa).

Tyrosine 18 contacts substrate. Catalysis depends on histidine 22, which acts as the Proton donor. Substrate-binding positions include tyrosine 41 and tryptophan 76 to tryptophan 77.

Belongs to the rhamnose mutarotase family. In terms of assembly, homodimer.

It localises to the cytoplasm. It carries out the reaction alpha-L-rhamnose = beta-L-rhamnose. The protein operates within carbohydrate metabolism; L-rhamnose metabolism. In terms of biological role, involved in the anomeric conversion of L-rhamnose. The chain is L-rhamnose mutarotase from Paraburkholderia xenovorans (strain LB400).